The following is a 159-amino-acid chain: Small ribosomal subunit protein bS6 (159 aa).

Non-standard amino acids (selenocysteine) are located at selenocysteine 46 and selenocysteine 52.

This sequence belongs to the bacterial ribosomal protein bS6 family.

Its function is as follows. Binds together with bS18 to 16S ribosomal RNA. The chain is Small ribosomal subunit protein bS6 from Desulfotalea psychrophila (strain LSv54 / DSM 12343).